Consider the following 849-residue polypeptide: Serine/threonine-protein phosphatase 4 regulatory subunit 3B (849 aa).

One can recognise a WH1 domain in the interval 1-100; the sequence is MSDTRRRVKV…DEIWEKICQV (100 aa). Phosphoserine is present on residues Ser-117 and Ser-695. A compositionally biased stretch (acidic residues) spans 714–724; that stretch reads EMWFNEDEEEE. Residues 714 to 849 are disordered; the sequence is EMWFNEDEEE…SPRKRPRLGS (136 aa). The segment covering 733–764 has biased composition (basic and acidic residues); the sequence is EKPKPEDDFPDNYEKFMETKKAKESEDKENLP. Positions 776–818 are enriched in polar residues; sequence FSHSASAANGTNSKSVVAQIPPATSNGSSSKTTNLPTSVTATK. Residues 827-838 show a composition bias toward acidic residues; that stretch reads YPDDEEEDEEEE. Ser-840 bears the Phosphoserine mark.

Belongs to the SMEK family. Serine/threonine-protein phosphatase 4 (PP4) occurs in different assemblies of the catalytic and one or more regulatory subunits. Component of the PP4 complex PPP4C-PPP4R2-PPP4R3B. As to expression, moderately expressed in tissues and specific brain regions examined.

It is found in the cytoplasm. The protein resides in the cytoskeleton. Its subcellular location is the microtubule organizing center. It localises to the centrosome. The protein localises to the nucleus. Regulatory subunit of serine/threonine-protein phosphatase 4 (PP4). May regulate the activity of PPP4C at centrosomal microtubule organizing centers. This is Serine/threonine-protein phosphatase 4 regulatory subunit 3B from Homo sapiens (Human).